The primary structure comprises 279 residues: Energy-coupling factor transporter ATP-binding protein EcfA1 (279 aa).

In terms of domain architecture, ABC transporter spans 8-240 (IKFENVSFSY…KQFLRDINLD (233 aa)). 41 to 48 (GHNGSGKS) serves as a coordination point for ATP.

This sequence belongs to the ABC transporter superfamily. Energy-coupling factor EcfA family. As to quaternary structure, forms a stable energy-coupling factor (ECF) transporter complex composed of 2 membrane-embedded substrate-binding proteins (S component), 2 ATP-binding proteins (A component) and 2 transmembrane proteins (T component).

The protein localises to the cell membrane. Functionally, ATP-binding (A) component of a common energy-coupling factor (ECF) ABC-transporter complex. Unlike classic ABC transporters this ECF transporter provides the energy necessary to transport a number of different substrates. In Mycoplasmoides gallisepticum (strain R(low / passage 15 / clone 2)) (Mycoplasma gallisepticum), this protein is Energy-coupling factor transporter ATP-binding protein EcfA1.